The sequence spans 143 residues: Peptide methionine sulfoxide reductase MsrB (143 aa).

The MsrB domain maps to 16–139; that stretch reads DAELRRRLTP…NSAALNFESR (124 aa). Zn(2+) contacts are provided by cysteine 55, cysteine 58, cysteine 104, and cysteine 107. The Nucleophile role is filled by cysteine 128.

The protein belongs to the MsrB Met sulfoxide reductase family. Zn(2+) is required as a cofactor.

The catalysed reaction is L-methionyl-[protein] + [thioredoxin]-disulfide + H2O = L-methionyl-(R)-S-oxide-[protein] + [thioredoxin]-dithiol. This chain is Peptide methionine sulfoxide reductase MsrB, found in Burkholderia cenocepacia (strain HI2424).